The primary structure comprises 476 residues: MAIKVRLAPSPTGKLHIGTARTALFNWLFARKNNGSFLIRIEDTDKERSQEEYKENILEGLDWLGLTWDAEPIIQSNRIEQHREAIKYLLEKGLAYRCFTTEEELAAMREEQKSRNKPPRYDNRHRSLSTEEESNFLSEGRTAVIRFRIDDNESIQWNDLVRGPMNWTGKDLGGDMVIARRAPANEIGDPLYNLVVVIDDGYMGITHVIRGEDHIANTAKQILLYKALGLTLPKFAHTPLILNAEGKKLSKRDGVTSISDFKEMGYTSKAMSNYMTLLGWSIPDGMDEKFTIEESSKVFDFDRVNKAGAKFDWEKLKWLNSQTIHDSSSEEILKAVEPLFNKEGWDLPNLEWSLKLIELIKPSMTLLTDSVEQSRFFFEDPLLNQDAINQLEIEGAKDSLKILLKQIDTSKINKLTVEHAKKLINDAAVFGGFKKGLIMKSLRAALLGCLQGPDVINSWILLSEINQDKSRIERCL.

A 'HIGH' region motif is present at residues 9-19 (PSPTGKLHIGT). Residues 109 to 129 (REEQKSRNKPPRYDNRHRSLS) show a composition bias toward basic and acidic residues. Residues 109–133 (REEQKSRNKPPRYDNRHRSLSTEEE) are disordered. Positions 248-252 (KLSKR) match the 'KMSKS' region motif. Lys251 provides a ligand contact to ATP.

This sequence belongs to the class-I aminoacyl-tRNA synthetase family. Glutamate--tRNA ligase type 1 subfamily. As to quaternary structure, monomer.

The protein localises to the cytoplasm. The catalysed reaction is tRNA(Glu) + L-glutamate + ATP = L-glutamyl-tRNA(Glu) + AMP + diphosphate. Functionally, catalyzes the attachment of glutamate to tRNA(Glu) in a two-step reaction: glutamate is first activated by ATP to form Glu-AMP and then transferred to the acceptor end of tRNA(Glu). This is Glutamate--tRNA ligase from Prochlorococcus marinus (strain MIT 9211).